Consider the following 339-residue polypeptide: WAT1-related protein At5g40210 (339 aa).

10 helical membrane-spanning segments follow: residues 11–31 (GWILTAMVVTEFSNVGVNTLV), 42–62 (FVVLVYSYTFGSLLLLPLTFF), 74–94 (FSILCNMGILGLIASAFQILG), 104–124 (TLSSAMSNVNPAFTFILAVVF), 140–160 (VLGTILSIIGALVVTLYHGPM), 168–188 (WIIGGGLLALQYILVSVSYLV), 200–220 (VVVTLVHNVCIAVVCAFVSLL), 233–253 (FDITLITVVATGILNSGYYVI), 266–286 (LSMFKPLSILIAAVSTFIFLG), and 289–309 (LYLGSVMGGILISIGFYMVLW). The 126-residue stretch at 29 to 154 (TLVKAATSKG…LSIIGALVVT (126 aa)) folds into the EamA domain.

It belongs to the drug/metabolite transporter (DMT) superfamily. Plant drug/metabolite exporter (P-DME) (TC 2.A.7.4) family.

It localises to the membrane. The chain is WAT1-related protein At5g40210 from Arabidopsis thaliana (Mouse-ear cress).